We begin with the raw amino-acid sequence, 338 residues long: Aspartate-semialdehyde dehydrogenase (338 aa).

Residues 13-16 (TGNV) and 41-42 (NS) contribute to the NADP(+) site. Arg-101 provides a ligand contact to phosphate. Cys-132 serves as the catalytic Acyl-thioester intermediate. Substrate is bound at residue Gln-159. 162–163 (SG) contacts NADP(+). Lys-216 serves as a coordination point for phosphate. Arg-237 contributes to the substrate binding site. The active-site Proton acceptor is His-244. Asn-317 contacts NADP(+).

The protein belongs to the aspartate-semialdehyde dehydrogenase family. As to quaternary structure, homodimer.

It carries out the reaction L-aspartate 4-semialdehyde + phosphate + NADP(+) = 4-phospho-L-aspartate + NADPH + H(+). It functions in the pathway amino-acid biosynthesis; L-lysine biosynthesis via DAP pathway; (S)-tetrahydrodipicolinate from L-aspartate: step 2/4. Its pathway is amino-acid biosynthesis; L-methionine biosynthesis via de novo pathway; L-homoserine from L-aspartate: step 2/3. It participates in amino-acid biosynthesis; L-threonine biosynthesis; L-threonine from L-aspartate: step 2/5. In terms of biological role, catalyzes the NADPH-dependent formation of L-aspartate-semialdehyde (L-ASA) by the reductive dephosphorylation of L-aspartyl-4-phosphate. The sequence is that of Aspartate-semialdehyde dehydrogenase from Rickettsia bellii (strain RML369-C).